The primary structure comprises 155 residues: Protein U1 (155 aa).

The protein belongs to the nanovirus U1 protein family.

This chain is Protein U1 (DNA-U1), found in Cicer arietinum (Chickpea).